Reading from the N-terminus, the 210-residue chain is Cuticle collagen 2C (210 aa).

Positions 11–210 are disordered; the sequence is CTGGQAGPPG…GVFFEDGTRR (200 aa). 2 stretches are compositionally biased toward pro residues: residues 40–76 and 88–103; these read PGRP…PGEP and DAPP…PGPP. The span at 105–122 shows a compositional bias: low complexity; that stretch reads KAGAPGAAGQPGANAPSE. Over residues 123–144 the composition is skewed to pro residues; the sequence is PLVPGPPGPPGPTGPEGPPGPN. Positions 167–179 are enriched in low complexity; the sequence is HPGAPGNAGHPGQ.

Belongs to the cuticular collagen family.

Functionally, nematode cuticles are composed largely of collagen-like proteins. The cuticle functions both as an exoskeleton and as a barrier to protect the worm from its environment. This is Cuticle collagen 2C (2C) from Haemonchus contortus (Barber pole worm).